The following is a 138-amino-acid chain: Small ribosomal subunit protein uS11c (138 aa).

The disordered stretch occupies residues M1 to A22. Residues S9–A22 show a composition bias toward basic residues.

It belongs to the universal ribosomal protein uS11 family. In terms of assembly, part of the 30S ribosomal subunit.

The protein resides in the plastid. Its subcellular location is the chloroplast. The polypeptide is Small ribosomal subunit protein uS11c (Nicotiana tomentosiformis (Tobacco)).